A 91-amino-acid chain; its full sequence is Potassium channel toxin TtrKIK (91 aa).

A signal peptide spans 1–25; that stretch reads MVATNRCCVFALLFALLLVHSLTEA. Residues 26 to 44 constitute a propeptide that is removed on maturation; that stretch reads GKGKEVLGKIKDKLIEAKD. The BetaSPN-type CS-alpha/beta domain occupies 58–91; that stretch reads EYACPAIEKFCEDHCAAKKAVGKCDDFKCNCIKL. 3 disulfides stabilise this stretch: Cys61–Cys81, Cys68–Cys86, and Cys72–Cys88.

The protein belongs to the long chain scorpion toxin family. Class 2 subfamily. As to expression, expressed by the venom gland.

The protein resides in the secreted. In terms of biological role, the full peptide presents antibacterial and cytotoxic activities. The synthetic C-terminus (AA 33-76) inhibits voltage-gated potassium channels Kv1.1/KCNA1, Kv1.2/KCNA2, and Kv1.3/KCNA3. This is Potassium channel toxin TtrKIK from Tityus trivittatus (Argentinean scorpion).